The sequence spans 178 residues: MFKGTTILSVRRGNHVVMGGDGQVSIGNTVAKSNARKVRLMSDGKVLAGFAGSTADAFTLFERFEGKLSKHGGNLTRAAVEMAKDWRTDRVLRRLEAMLAVADEHCSLLISGNGDVLEPEEGVIAIGSGGPYALSAARALLRHTSLNPRQIVESSLEVAAEICVFTNNNLTIEELGGE.

Residue Thr5 is part of the active site. Ala160, Cys163, and Thr166 together coordinate Na(+).

This sequence belongs to the peptidase T1B family. HslV subfamily. As to quaternary structure, a double ring-shaped homohexamer of HslV is capped on each side by a ring-shaped HslU homohexamer. The assembly of the HslU/HslV complex is dependent on binding of ATP.

The protein localises to the cytoplasm. The catalysed reaction is ATP-dependent cleavage of peptide bonds with broad specificity.. With respect to regulation, allosterically activated by HslU binding. Its function is as follows. Protease subunit of a proteasome-like degradation complex believed to be a general protein degrading machinery. This chain is ATP-dependent protease subunit HslV, found in Magnetococcus marinus (strain ATCC BAA-1437 / JCM 17883 / MC-1).